A 211-amino-acid polypeptide reads, in one-letter code: tRNA (guanine-N(7)-)-methyltransferase (211 aa).

S-adenosyl-L-methionine-binding residues include Glu44, Asp69, Asp96, and Asp118. Asp118 is an active-site residue. Lys122 is a substrate binding site. An interaction with RNA region spans residues 124–129 (KHEKRR). Substrate contacts are provided by residues Asp154 and 191 to 194 (TEYE).

The protein belongs to the class I-like SAM-binding methyltransferase superfamily. TrmB family.

The catalysed reaction is guanosine(46) in tRNA + S-adenosyl-L-methionine = N(7)-methylguanosine(46) in tRNA + S-adenosyl-L-homocysteine. It participates in tRNA modification; N(7)-methylguanine-tRNA biosynthesis. In terms of biological role, catalyzes the formation of N(7)-methylguanine at position 46 (m7G46) in tRNA. The sequence is that of tRNA (guanine-N(7)-)-methyltransferase from Streptococcus uberis (strain ATCC BAA-854 / 0140J).